We begin with the raw amino-acid sequence, 562 residues long: Calcium-dependent protein kinase 5 (562 aa).

The Protein kinase domain maps to 118–372 (ELDKYKLGKG…VHKIVNHKWF (255 aa)). Residues 124-132 (LGKGSYGNV) and Lys-147 each bind ATP. Asp-238 functions as the Proton acceptor in the catalytic mechanism. The J domain autoinhibitory motif signature appears at 394–402 (KFKKFHKLC). The interval 394 to 429 (KFKKFHKLCKIKKLAITCIAYQLNKKKFGKMKKTFE) is j domain. Positions 403 to 412 (KIKKLAITCI) match the J domain EF-hand interaction motif motif. EF-hand domains follow at residues 419 to 453 (KKFGKMKKTFEAFDHNGDGVLTISEIFQCLKVGDN), 454 to 489 (EIDRDLYYLLKQLDTDGNGLIDYTEFLAACLDHSIL), 490 to 525 (EQDAVCRNAFKIFDANGDGIITKDELLNVLSFSNDQ), and 528 to 562 (FSKEIIENVIKEVDANNDGYIDYDEFYKMMSGRQS). Residues Asp-432, Asn-434, Asp-436, Glu-443, Asp-467, Asp-469, Asn-471, Glu-478, Asp-503, Asn-505, Asp-507, Glu-514, Asp-541, Asn-543, Asp-545, Tyr-547, and Glu-552 each contribute to the Ca(2+) site.

The protein belongs to the protein kinase superfamily. Ser/Thr protein kinase family. CDPK subfamily. Mg(2+) serves as cofactor. May be palmitoylated. In terms of processing, autophosphorylated in vitro.

The protein resides in the cytoplasm. It localises to the cytoplasmic vesicle. It is found in the secretory vesicle. The protein localises to the microneme membrane. Its subcellular location is the cell membrane. The catalysed reaction is L-seryl-[protein] + ATP = O-phospho-L-seryl-[protein] + ADP + H(+). It catalyses the reaction L-threonyl-[protein] + ATP = O-phospho-L-threonyl-[protein] + ADP + H(+). Its activity is regulated as follows. Activated by calcium. Upon calcium binding to the EF-hand domains, the C-terminus of the junction domain (J domain) undergoes a conformational change which results in the dissociation of the pseudo-substrate inhibitory motif from the catalytic domain. This, in turn, may facilitate the autophosphorylation of the activation loop at Thr-278, which leads to the kinase activation. Functionally, calcium-dependent protein kinase which acts as a sensor and effector of intracellular Ca(2+) levels probably in part downstream of cGMP-activated PKG kinase. Plays a central role in host erythrocytes and hepatocytes infection cycles. During the liver stage, involved in sporozoite motility and thus in sporozoite invasion of host hepatocytes, probably together with CDPK1 and CDPK4. Involved in merosome egress from host hepatocytes, probably together with CDPK4. Required for the release of hepatic merozoites from merosomes in the host blood stream. During the asexual blood stage, required for merozoite egress from host erythrocytes by triggering microneme secretion. Phosphorylates transporter NPT1 at late schizont stage. In Plasmodium berghei (strain Anka), this protein is Calcium-dependent protein kinase 5.